A 162-amino-acid polypeptide reads, in one-letter code: Transcription elongation factor GreA (162 aa).

Residues 45–74 are a coiled coil; sequence ENAEYEAAREKQAFIEGRIKELEDMTARAE.

The protein belongs to the GreA/GreB family.

Its function is as follows. Necessary for efficient RNA polymerase transcription elongation past template-encoded arresting sites. The arresting sites in DNA have the property of trapping a certain fraction of elongating RNA polymerases that pass through, resulting in locked ternary complexes. Cleavage of the nascent transcript by cleavage factors such as GreA or GreB allows the resumption of elongation from the new 3'terminus. GreA releases sequences of 2 to 3 nucleotides. The chain is Transcription elongation factor GreA from Rickettsia prowazekii (strain Madrid E).